Reading from the N-terminus, the 372-residue chain is DNA/RNA-binding protein ALBA4 (372 aa).

This sequence belongs to the histone-like Alba family. In terms of assembly, identified in a TARE6-associated complex consisting of over 30 proteins and including ALBA1, ALBA2 and ALBA4; the complex binds to the non-coding subtelomeric repeat region TARE6.

Its subcellular location is the nucleus. The protein resides in the chromosome. It localises to the telomere. It is found in the cytoplasm. In terms of biological role, possesses DNA- and RNA-binding activities. Binds to DNA fragments longer than 14 base pairs with relaxed sequence specificity. Associates with the subtelomeric TARE6 repeats. Regulates the abundance of transcript sub-populations in a stage-specific manner. Regulates activation of male gametocytes. Participates in the coordination of sporozoite development in the oocyst. The protein is DNA/RNA-binding protein ALBA4 of Plasmodium falciparum (isolate 3D7).